The chain runs to 106 residues: MDAQKMKMVIGLVLVATTAFALMIPAASAVDDFITRRAYDNLVKSGAIKDIPVMAKTIISNPVLEEGMLTYYTNKKLGDSAISCGETCFKFKCYTPRCSCSYPVCK.

The first 29 residues, 1–29 (MDAQKMKMVIGLVLVATTAFALMIPAASA), serve as a signal peptide directing secretion. Residues 30–79 (VDDFITRRAYDNLVKSGAIKDIPVMAKTIISNPVLEEGMLTYYTNKKLGD) constitute a propeptide that is removed on maturation. 3 disulfides stabilise this stretch: cysteine 84–cysteine 98, cysteine 88–cysteine 100, and cysteine 93–cysteine 105.

It belongs to the cyclotide family. Moebius subfamily. Post-translationally, violacin-A is not a cyclic peptide.

In terms of biological role, probably participates in a plant defense mechanism. Has low hemolytic activity. The sequence is that of Violacin-A from Viola odorata (Sweet violet).